The following is an 877-amino-acid chain: Alanine--tRNA ligase (877 aa).

4 residues coordinate Zn(2+): histidine 562, histidine 566, cysteine 664, and histidine 668.

Belongs to the class-II aminoacyl-tRNA synthetase family. Requires Zn(2+) as cofactor.

Its subcellular location is the cytoplasm. It carries out the reaction tRNA(Ala) + L-alanine + ATP = L-alanyl-tRNA(Ala) + AMP + diphosphate. In terms of biological role, catalyzes the attachment of alanine to tRNA(Ala) in a two-step reaction: alanine is first activated by ATP to form Ala-AMP and then transferred to the acceptor end of tRNA(Ala). Also edits incorrectly charged Ser-tRNA(Ala) and Gly-tRNA(Ala) via its editing domain. This chain is Alanine--tRNA ligase, found in Synechocystis sp. (strain ATCC 27184 / PCC 6803 / Kazusa).